A 155-amino-acid polypeptide reads, in one-letter code: Small ribosomal subunit protein uS7cz/uS7cy (155 aa).

It belongs to the universal ribosomal protein uS7 family. As to quaternary structure, part of the 30S ribosomal subunit.

The protein resides in the plastid. The protein localises to the chloroplast. Functionally, one of the primary rRNA binding proteins, it binds directly to 16S rRNA where it nucleates assembly of the head domain of the 30S subunit. The polypeptide is Small ribosomal subunit protein uS7cz/uS7cy (rps7-A) (Piper cenocladum (Ant piper)).